We begin with the raw amino-acid sequence, 478 residues long: Antiviral innate immune response effector IFIT1 (478 aa).

TPR repeat units lie at residues 52–85 (VGIHNLLAYVKHLKGQNEEALKSLKEAEDLMQKE), 95–128 (LVTWSNFAWVYYHMGRLAEAQAYLDKVENICKKP), 139–174 (PEIDCEEGWALLKCGGKNYERAKACFEKALEGDHEN), 183–216 (ISAYRLDGFKLATKGYRQFSLLPLRQAVSLNPDN), 218–249 (YLKVLLALKLQDNGQEAEGEKYLEEALANMSS), and 251–284 (TYVFRYAAKFYRRKGSVDKALELLKKALQETPTS). Tryptophan 147 lines the mRNA pocket. Residue glycine 190 coordinates RNA. Residues lysine 259, histidine 289, glutamine 290, and lysine 336 each coordinate RNA. TPR repeat units lie at residues 305–339 (ATKGQPRGQNREKIDKMIRLAIFHFESAVENKPTF), 340–373 (EVAHLDLARMYIEAGNHRKAEETFQKLLCMKPVV), 378–412 (QDIHLQYARFQEFQKKSEINAIIHYLKAIKIEQTS), and 437–470 (LESLSLLGFVYKLKGNMNEALEYYERALRLAADF).

Belongs to the IFIT family. In terms of assembly, component of an interferon-dependent multiprotein complex, at least composed of IFIT1, IFIT2 and IFIT3. Interacts (via TPR repeats 1-4) with RPL15. Interacts with STING1/MITA; could disrupt STING1 interaction with MAVS or TBK1, acting as a negative-feedback regulator of virus-triggered signaling. Interacts with EIF3E; this could be an alternative way to inhibit translation. In terms of processing, phosphorylated. ISGylated.

The protein localises to the cytoplasm. Plays a key role in the innate immune response as part of an interferon-dependent multiprotein complex, recognizing and sequestering viral RNAs that lack host-specific 2'-O-methylation at their 5' cap. By distinguishing these RNAs from host mRNAs, inhibits their translation by competing with the translation initiation factor eIF4E. Could also prevent viral replication through its interaction with DNA replication origin-binding protein E1 of several viruses. Causes the translocation of E1 from the nucleus to the cytoplasm and can also inhibit its helicase activity in vitro. In Macaca fascicularis (Crab-eating macaque), this protein is Antiviral innate immune response effector IFIT1.